The chain runs to 288 residues: Inorganic pyrophosphatase (288 aa).

Arginine 80 is a diphosphate binding site. Mg(2+) contacts are provided by aspartate 117, aspartate 122, and aspartate 154. The tract at residues 252–271 (TPSYSDAAAQEIPSASPAPA) is disordered. The span at 258-271 (AAAQEIPSASPAPA) shows a compositional bias: low complexity.

It belongs to the PPase family. It depends on Mg(2+) as a cofactor.

It is found in the cytoplasm. The enzyme catalyses diphosphate + H2O = 2 phosphate + H(+). This chain is Inorganic pyrophosphatase (IPP1), found in Candida albicans (strain SC5314 / ATCC MYA-2876) (Yeast).